Reading from the N-terminus, the 726-residue chain is Disintegrin and metalloproteinase domain-containing protein 20 (726 aa).

Positions 1–31 (MAVGEPLVHIRVTLLLLWFGMFLSISGHSQA) are cleaved as a signal peptide. Residues 32-206 (RPSQYFTSPE…SSFVGWWTHQ (175 aa)) constitute a propeptide that is removed on maturation. The short motif at 171–178 (MRCGLTEE) is the Cysteine switch element. C173 contributes to the Zn(2+) binding site. N191 and N226 each carry an N-linked (GlcNAc...) asparagine glycan. The Peptidase M12B domain maps to 207–400 (RFVELVVVVD…SGLCIQPPPY (194 aa)). Topologically, residues 207–693 (RFVELVVVVD…GLNVMGKLRY (487 aa)) are extracellular. 3 disulfide bridges follow: C317-C394, C357-C379, and C359-C364. Residue H342 participates in Zn(2+) binding. Residue E343 is part of the active site. Residues H346 and H352 each coordinate Zn(2+). Residues N378, N438, N479, and N587 are each glycosylated (N-linked (GlcNAc...) asparagine). The 87-residue stretch at 407-493 (LKYCGNLVVE…QCPDDVYVQD (87 aa)) folds into the Disintegrin domain. Cysteines 465 and 485 form a disulfide. Intrachain disulfides connect C635-C646, C640-C652, and C654-C663. Residues 635–663 (CQPKTCNMRGICNNKQHCHCNHEWAPPYC) form the EGF-like domain. Residues 694–714 (LSLLCLLPLVAFLLFCLHVLF) traverse the membrane as a helical segment. Topologically, residues 715–726 (KKRTKSKEDEEG) are cytoplasmic.

The cofactor is Zn(2+). Post-translationally, has no obvious cleavage site for furin endopeptidase, suggesting that the proteolytic processing is regulated. As to expression, testis specific.

The protein resides in the membrane. Functionally, may be involved in sperm maturation and/or fertilization. This chain is Disintegrin and metalloproteinase domain-containing protein 20 (ADAM20), found in Homo sapiens (Human).